The primary structure comprises 652 residues: MKKRIRELTDLLNQYRQEYYTNDAPSVSDSEYDKLYRELVELEQTYPAYILKDSPTQLVGGTILTGFQKYQHQYPLFSLQDAFSREELNAFDQRIKSAFPEAEYLAELKIDGLSISLVYEAGILKVGATRGDGTIGENITENIKNIKDIPKRLSQALDVTIRGEAYMSRKAFKTINEERQENGEPEFANPRNAAAGTLRQLDTRIVAKRQLATFLYQEVGLEAADSQQRTLERLADLGFSVNSHYLLSSSMNDIWDFIQSIEATREELPYEIDGVVVKVNQLAIQEELGFTVKAPRWAIAYKFPAEEKEAEIVSVDWTVGRTGVVTPTANLTPVQLAGTTVSRATLHNVDYIAEKDIRIGDTVVVYKAGDIIPAVLRVVEAKRSNQTPMPIPTACPSCQSQLVHFEDEVALRCINPLCPSLIQRSLEHFASRQAMNIAGLGPAVVEKLYSAGLVHDVTDIYRLSLEDLLMLDGIKEKSAEKLLAAIEQSKANSAEKLLFGLGIRHIGAKASRLILETYGDLETLLSVTAEELAQIDGLGLVIGQSLVQYFQQDQATQLLAELKSAGVNLAYLGQRPDRQAELFGLTVVLTGKLEKLNRTQAKEKLEQLGAKVTGSVSKKTDLVVAGSEAGSKLAKAQQLGIRIEDEDWLLNL.

NAD(+) contacts are provided by residues 29–33 (DSEYD), 78–79 (SL), and glutamate 107. Catalysis depends on lysine 109, which acts as the N6-AMP-lysine intermediate. The NAD(+) site is built by arginine 130, glutamate 164, lysine 278, and lysine 302. Zn(2+) is bound by residues cysteine 395, cysteine 398, cysteine 413, and cysteine 418. One can recognise a BRCT domain in the interval 577-652 (DRQAELFGLT…IEDEDWLLNL (76 aa)).

This sequence belongs to the NAD-dependent DNA ligase family. LigA subfamily. Requires Mg(2+) as cofactor. Mn(2+) serves as cofactor.

The catalysed reaction is NAD(+) + (deoxyribonucleotide)n-3'-hydroxyl + 5'-phospho-(deoxyribonucleotide)m = (deoxyribonucleotide)n+m + AMP + beta-nicotinamide D-nucleotide.. Its function is as follows. DNA ligase that catalyzes the formation of phosphodiester linkages between 5'-phosphoryl and 3'-hydroxyl groups in double-stranded DNA using NAD as a coenzyme and as the energy source for the reaction. It is essential for DNA replication and repair of damaged DNA. The polypeptide is DNA ligase (Streptococcus equi subsp. zooepidemicus (strain MGCS10565)).